The following is a 218-amino-acid chain: Pyridoxine/pyridoxamine 5'-phosphate oxidase (218 aa).

Residues 14 to 17 (RREY) and K72 contribute to the substrate site. Residues 67–72 (RIVLLK), 82–83 (YT), R88, K89, and Q111 contribute to the FMN site. Substrate-binding residues include Y129, R133, and S137. FMN contacts are provided by residues 146–147 (QS) and W191. 197–199 (RLH) contacts substrate. R201 serves as a coordination point for FMN.

This sequence belongs to the pyridoxamine 5'-phosphate oxidase family. Homodimer. Requires FMN as cofactor.

The enzyme catalyses pyridoxamine 5'-phosphate + O2 + H2O = pyridoxal 5'-phosphate + H2O2 + NH4(+). The catalysed reaction is pyridoxine 5'-phosphate + O2 = pyridoxal 5'-phosphate + H2O2. The protein operates within cofactor metabolism; pyridoxal 5'-phosphate salvage; pyridoxal 5'-phosphate from pyridoxamine 5'-phosphate: step 1/1. It functions in the pathway cofactor metabolism; pyridoxal 5'-phosphate salvage; pyridoxal 5'-phosphate from pyridoxine 5'-phosphate: step 1/1. Catalyzes the oxidation of either pyridoxine 5'-phosphate (PNP) or pyridoxamine 5'-phosphate (PMP) into pyridoxal 5'-phosphate (PLP). This is Pyridoxine/pyridoxamine 5'-phosphate oxidase from Citrobacter koseri (strain ATCC BAA-895 / CDC 4225-83 / SGSC4696).